The chain runs to 635 residues: Dual specificity protein kinase zak2 (635 aa).

2 Protein kinase domains span residues 9–249 and 299–585; these read WEEI…HRLI and NKDD…QIYF. Residues 15–23 and K45 contribute to the ATP site; that span reads IGSCNSKSR. D124 acts as the Proton acceptor in catalysis. ATP-binding positions include 305–313 and K326; that span reads GGDGFFSVV. The active-site Proton acceptor is the D427.

In the N-terminal section; belongs to the protein kinase superfamily. Ser/Thr protein kinase family. The protein in the C-terminal section; belongs to the protein kinase superfamily. TKL Tyr protein kinase family. Post-translationally, C-terminal tyrosine kinase domain is capable of autophosphorylation, in vitro. ZakA and zak2 are coexpressed in prestalk cell population, zakA is enriched in pstB populations and zak1 in pstA populations. ZakA and zak2 are coexpressed in prespore cells, zakA expression levels are 10 fold higher than zak2.

The catalysed reaction is L-seryl-[protein] + ATP = O-phospho-L-seryl-[protein] + ADP + H(+). The enzyme catalyses L-threonyl-[protein] + ATP = O-phospho-L-threonyl-[protein] + ADP + H(+). It carries out the reaction L-tyrosyl-[protein] + ATP = O-phospho-L-tyrosyl-[protein] + ADP + H(+). Its function is as follows. Positive regulator of gsk3/gskA activity required for cell pattern formation and a downstream effector of carC. The kinases, gsk3/gskA, zakA and zak2, form part of a signaling pathway that responds to extracellular cyclic AMP. The pathway has a role in transcriptional regulation; required to direct prespore/spore fates during development. Zak2 negatively regulates prestalk differentiation by regulating expression of ecmA. Phosphorylates Y-214 of gsk3/gskA, in vitro. This chain is Dual specificity protein kinase zak2 (zak2), found in Dictyostelium discoideum (Social amoeba).